The sequence spans 142 residues: Coactosin-like protein (142 aa).

A2 is subject to N-acetylalanine. The ADF-H domain occupies 2-130 (ATKIDKEACR…EEDFIKNELK (129 aa)). The interval 66–75 (TGDAMSKRSK) is flexible and important for F-actin binding. An N6-acetyllysine mark is found at K102 and K126.

It belongs to the actin-binding proteins ADF family. Coactosin subfamily. In terms of assembly, interacts with 5-lipoxygenase (ALOX5/5LO) in a calcium-independent manner. Binds to F-actin with a stoichiometry of 1:2.

It is found in the cytoplasm. It localises to the cytoskeleton. Its subcellular location is the nucleus. Functionally, binds to F-actin in a calcium-independent manner. Has no direct effect on actin depolymerization. Acts as a chaperone for ALOX5 (5LO), influencing both its stability and activity in leukotrienes synthesis. The protein is Coactosin-like protein (COTL1) of Bos taurus (Bovine).